A 1022-amino-acid polypeptide reads, in one-letter code: Collagen alpha-1(I) chain (1022 aa).

Residues 1-1022 form a disordered region; the sequence is SAGGISVPGP…PGPPGPPGPP (1022 aa). 11 positions are modified to 4-hydroxyproline: P20, P23, P26, P35, P38, P41, P56, P71, P77, P86, and P92. Residues 28-47 show a composition bias toward low complexity; the sequence is PQGFQGPPGEPGEPGASGPM. Over residues 59 to 73 the composition is skewed to basic and acidic residues; sequence NGDDGEAGKPGRPGE. Residue K95 is modified to 5-hydroxylysine; alternate. O-linked (Gal...) hydroxylysine; alternate glycosylation is present at K95. Phosphoserine is present on S101. A compositionally biased stretch (low complexity) spans 109-125; the sequence is DAGPAGPKGEPGSPGEN. 4-hydroxyproline occurs at positions 119, 122, 128, 137, 143, 164, 173, 176, 203, 206, 218, 224, 233, 239, 242, and 257. Residues 143-161 show a composition bias toward low complexity; that stretch reads PGASGPAGARGNDGAAGAA. The span at 163 to 175 shows a compositional bias: pro residues; sequence PPGPTGPAGPPGF. Residues 209 to 259 show a composition bias toward low complexity; sequence AGAAGPAGNPGADGQPGAKGANGAPGIAGAPGFPGARGPSGPQGPSGAPGP. K260 bears the 5-hydroxylysine mark. Residues P266, P269, P281, P290, P305, P311, P320, and P326 each carry the 4-hydroxyproline modification. Residues 315–324 are compositionally biased toward gly residues; that stretch reads GERGGPGSRG. K335 is modified (5-hydroxylysine). 4-hydroxyproline is present on residues P344, P353, P359, P365, P374, P377, P386, P395, P401, P413, P422, P431, P434, P452, P470, P476, P482, P488, P494, P500, P512, P521, P533, P545, P548, P554, P560, and P569. Residues 368–394 show a composition bias toward low complexity; it reads KGLTGSPGSPGPDGKTGPPGPAGQDGR. A compositionally biased stretch (low complexity) spans 403–422; sequence ARGQAGVMGFPGPKGAAGEP. Residues 464–491 show a composition bias toward low complexity; that stretch reads QGPAGSPGFQGLPGPAGPPGEAGKPGEQ. The segment covering 530–557 has biased composition (low complexity); sequence NGAPGNDGAKGDAGAPGAPGSQGAPGLQ. Position 581 is a 5-hydroxylysine (K581). A 4-hydroxyproline mark is found at P587, P602, and P608. Low complexity predominate over residues 614-628; sequence SGPSGPAGPTGARGA. S617 is modified (phosphoserine). 8 positions are modified to 4-hydroxyproline: P629, P635, P638, P647, P653, P671, P680, and P689. Residues 641 to 668 show a composition bias toward low complexity; that stretch reads AGFAGPPGADGQPGAKGEPGDAGAKGDA. Residues 670 to 682 are compositionally biased toward pro residues; that stretch reads PPGPAGPTGPPGP. 5-hydroxylysine is present on K692. Residues 697-713 are compositionally biased toward low complexity; that stretch reads SAGPPGATGFPGAAGRV. 4-hydroxyproline is present on residues P701 and P707. 3-hydroxyproline is present on P715. A 4-hydroxyproline mark is found at P716, P725, P728, P749, P758, P767, P776, P794, P803, P806, P812, P827, P833, P839, P848, and P854. A compositionally biased stretch (low complexity) spans 742–751; that stretch reads ETGPAGRPGE. Residues 761–776 are compositionally biased toward low complexity; the sequence is TGEKGSPGADGPAGAP. Residues 826-836 show a composition bias toward pro residues; that stretch reads PPGPVGPPGLA. Residues 838-853 show a composition bias toward low complexity; it reads PPGESGREGSPGAEGS. Position 863 is a 5-hydroxylysine (K863). Positions 872–887 are enriched in pro residues; it reads AGPPGAPGAPGAPGPV. P875, P878, and P881 each carry 4-hydroxyproline. Residues 908–922 show a composition bias toward low complexity; the sequence is AGPAGARGPAGPQGP. A compositionally biased stretch (basic and acidic residues) spans 923–937; that stretch reads RGDKGETGEQGDRGI. The residue at position 926 (K926) is a 5-hydroxylysine. Position 938 is a 5-hydroxylysine; alternate (K938). A glycan (O-linked (Gal...) hydroxylysine; alternate) is linked at K938. P953, P956, P974, and P989 each carry 4-hydroxyproline. The segment covering 956–989 has biased composition (low complexity); sequence PGEQGPSGASGPAGPRGPPGSAGSPGKDGLNGLP. At P994 the chain carries 3-hydroxyproline. P995 bears the 4-hydroxyproline mark. Residues 1007–1022 show a composition bias toward pro residues; that stretch reads VGPPGPPGPPGPPGPP. P1009 is subject to 3-hydroxyproline. P1010 is subject to 4-hydroxyproline. P1012 is modified (3-hydroxyproline). A 4-hydroxyproline modification is found at P1013. P1015 carries the 3-hydroxyproline modification. 4-hydroxyproline is present on residues P1016, P1019, and P1022.

Belongs to the fibrillar collagen family. In terms of assembly, trimers of one alpha 2(I) and two alpha 1(I) chains. In terms of processing, prolines at the third position of the tripeptide repeating unit (G-X-Y) are hydroxylated in some or all of the chains. Expressed in bone.

The protein resides in the secreted. The protein localises to the extracellular space. Its subcellular location is the extracellular matrix. Type I collagen is a member of group I collagen (fibrillar forming collagen). This chain is Collagen alpha-1(I) chain, found in Mylodon darwinii (Giant ground sloth).